Reading from the N-terminus, the 121-residue chain is Large ribosomal subunit protein uL18 (121 aa).

This sequence belongs to the universal ribosomal protein uL18 family. In terms of assembly, part of the 50S ribosomal subunit; part of the 5S rRNA/L5/L18/L25 subcomplex. Contacts the 5S and 23S rRNAs.

In terms of biological role, this is one of the proteins that bind and probably mediate the attachment of the 5S RNA into the large ribosomal subunit, where it forms part of the central protuberance. The chain is Large ribosomal subunit protein uL18 from Paraburkholderia phytofirmans (strain DSM 17436 / LMG 22146 / PsJN) (Burkholderia phytofirmans).